Here is a 172-residue protein sequence, read N- to C-terminus: Translation initiation factor IF-3 (172 aa).

It belongs to the IF-3 family. As to quaternary structure, monomer.

It localises to the cytoplasm. Functionally, IF-3 binds to the 30S ribosomal subunit and shifts the equilibrium between 70S ribosomes and their 50S and 30S subunits in favor of the free subunits, thus enhancing the availability of 30S subunits on which protein synthesis initiation begins. The chain is Translation initiation factor IF-3 from Haemophilus influenzae (strain ATCC 51907 / DSM 11121 / KW20 / Rd).